Consider the following 490-residue polypeptide: Cyclin-A2-1 (490 aa).

The disordered stretch occupies residues 34-76 (FAPSVSLPARTERKQTAKGKTKRGALDEITSASTATSAPQPKR). Polar residues predominate over residues 63–72 (TSASTATSAP).

Belongs to the cyclin family. Cyclin AB subfamily.

The chain is Cyclin-A2-1 (CYCA2-1) from Oryza sativa subsp. japonica (Rice).